The chain runs to 137 residues: Large-conductance mechanosensitive channel (137 aa).

3 helical membrane passes run 15–35 (VDLA…NSIV), 38–58 (IIMP…MFIQ), and 80–100 (GNFV…FLVV).

Belongs to the MscL family. In terms of assembly, homopentamer.

Its subcellular location is the cell inner membrane. Functionally, channel that opens in response to stretch forces in the membrane lipid bilayer. May participate in the regulation of osmotic pressure changes within the cell. The sequence is that of Large-conductance mechanosensitive channel from Brucella anthropi (strain ATCC 49188 / DSM 6882 / CCUG 24695 / JCM 21032 / LMG 3331 / NBRC 15819 / NCTC 12168 / Alc 37) (Ochrobactrum anthropi).